Here is a 292-residue protein sequence, read N- to C-terminus: Homoserine kinase (292 aa).

Residue 80 to 90 coordinates ATP; the sequence is PLARGLGSSSS.

The protein belongs to the GHMP kinase family. Homoserine kinase subfamily.

It is found in the cytoplasm. It catalyses the reaction L-homoserine + ATP = O-phospho-L-homoserine + ADP + H(+). It participates in amino-acid biosynthesis; L-threonine biosynthesis; L-threonine from L-aspartate: step 4/5. Functionally, catalyzes the ATP-dependent phosphorylation of L-homoserine to L-homoserine phosphate. This Leuconostoc mesenteroides subsp. mesenteroides (strain ATCC 8293 / DSM 20343 / BCRC 11652 / CCM 1803 / JCM 6124 / NCDO 523 / NBRC 100496 / NCIMB 8023 / NCTC 12954 / NRRL B-1118 / 37Y) protein is Homoserine kinase.